Consider the following 393-residue polypeptide: Ethanol acetyltransferase 1 (393 aa).

The transit peptide at 1-25 (MHFTRTLFNQVASKASRQLPVQKRV) directs the protein to the mitochondrion. Positions 49-151 (PIVFVHGIFG…GVIIDNSPIE (103 aa)) constitute an AB hydrolase-1 domain. Residues S122, D146, and H296 each act as charge relay system in the active site. Residues 343-354 (AKHAQQIEELRK) show a composition bias toward basic and acidic residues. Residues 343 to 393 (AKHAQQIEELRKVTSTSESSIPHSTQSSEQAFTENIDLARQEREHQKSVSA) form a disordered region. Polar residues predominate over residues 355 to 375 (VTSTSESSIPHSTQSSEQAFT). The span at 379–393 (DLARQEREHQKSVSA) shows a compositional bias: basic and acidic residues.

This sequence belongs to the AB hydrolase superfamily.

Its subcellular location is the mitochondrion. It catalyses the reaction ethanol + acetyl-CoA = ethyl acetate + CoA. The catalysed reaction is acetyl-CoA + H2O = acetate + CoA + H(+). The enzyme catalyses ethyl acetate + H2O = ethanol + acetate + H(+). In terms of biological role, alcohol acetyltransferase that catalyzes the synthesis of ethyl acetate from ethanol and acetyl-CoA. Can also function as a thioesterase by hydrolyzing acetyl-CoA in the absence of ethanol, as well as esterase hydrolyzing ethyl acetate. This Wickerhamomyces ciferrii (strain ATCC 14091 / BCRC 22168 / CBS 111 / JCM 3599 / NBRC 0793 / NRRL Y-1031 F-60-10) (Yeast) protein is Ethanol acetyltransferase 1 (EAT1).